The chain runs to 494 residues: Ell-associated factor Eaf (494 aa).

Polar residues predominate over residues 119-138 (KTRSEVTNKPSLMSATNAPM). Disordered regions lie at residues 119–212 (KTRS…PAWH) and 243–494 (QANI…DDDD). A compositionally biased stretch (low complexity) spans 139-156 (SNGAPVPSSAAAGTGSAG). The segment covering 159–178 (ENSTMRISSKTKVSTGSRRN) has biased composition (polar residues). S188 carries the post-translational modification Phosphoserine. 2 stretches are compositionally biased toward polar residues: residues 243–256 (QANI…SSAG) and 280–306 (QQLT…NNYA). Residues 307–319 (QQQQQQQQQQLQQ) are compositionally biased toward low complexity. A compositionally biased stretch (polar residues) spans 320 to 332 (RASFSHSNHSNSM). Low complexity predominate over residues 344–373 (QTAQSMAQAAAALEQQIGGELSASSSSSES). The span at 374-389 (DSSDSDSGSDSDDSTE) shows a compositional bias: acidic residues. Residues 414-424 (HQQQQHMHQLP) show a composition bias toward low complexity. Over residues 437–454 (SHHHHQQQQQSHHHHHHQ) the composition is skewed to basic residues. Composition is skewed to low complexity over residues 455 to 464 (QQQQQQHQQS) and 475 to 488 (NDLL…SSNS).

Belongs to the EAF family.

Its subcellular location is the nucleus. Its function is as follows. Promotes transcriptional elongation by Su(Tpl)/ELL. Essential for development. The polypeptide is Ell-associated factor Eaf (Drosophila virilis (Fruit fly)).